A 476-amino-acid chain; its full sequence is Cytosolic iron-sulfur assembly component 3 (476 aa).

Position 2 is an N-acetylalanine (Ala-2). Residues Cys-24, Cys-71, Cys-74, Cys-77, Cys-190, Cys-246, Cys-395, and Cys-399 each contribute to the [4Fe-4S] cluster site.

This sequence belongs to the NARF family. External component of the CIA complex. In the CIA complex, interacts directly with CIAO1 and MMS19.

Component of the cytosolic iron-sulfur protein assembly (CIA) complex, a multiprotein complex that mediates the incorporation of iron-sulfur cluster into extramitochondrial Fe/S proteins. Seems to negatively regulate the level of HIF1A expression, although this effect could be indirect. The polypeptide is Cytosolic iron-sulfur assembly component 3 (Rattus norvegicus (Rat)).